The following is a 1735-amino-acid chain: Cadherin-AgCad1 (1735 aa).

The N-terminal stretch at 1–30 (MKCVASKFNMWLHLGWLLGLLLVLLPLVRC) is a signal peptide. At 31-1574 (QGWGEPRFET…ALTEADETLQ (1544 aa)) the chain is on the extracellular side. The interval 166-1456 (VTDCLFNVYH…KVYIVSESNR (1291 aa)) is extracellular domain (EC). Cadherin domains lie at 171-273 (FNVY…PPIF), 280-378 (ERIM…IPEI), 379-498 (YMKP…VPKF), 499-620 (GRDE…PPQI), 621-757 (TLPR…APYF), 767-866 (SVKE…QPYH), 879-983 (EKIP…TPKL), 985-1109 (ELAA…TPSI), 1136-1235 (GSPL…EPTF), 1255-1350 (AEDP…PPVF), and 1351-1461 (QQRL…TFVF). 2 short sequence motifs (toxin-binding receptor motif) span residues 1344–1350 (NDNPPVF) and 1446–1456 (AKVYIVSESNR). The segment at 1358 to 1569 (GITTNDRVPK…PLATEALTEA (212 aa)) is CR11-MPED, increases toxicity of activated Cry4B toxin, peptide alone is not toxic. The interval 1457–1569 (VTFVFLNSVE…PLATEALTEA (113 aa)) is membrane-proximal EC domain (MPED). A helical transmembrane segment spans residues 1575-1595 (IILIVVSAALAVLCVILFVAF). The Cytoplasmic portion of the chain corresponds to 1596 to 1735 (FIKIRSLNRQ…ETDDELSHRF (140 aa)). The segment covering 1701–1719 (SLNPMANGTDKSNDGAPTS) has biased composition (polar residues). The tract at residues 1701 to 1735 (SLNPMANGTDKSNDGAPTSNHKKLDETDDELSHRF) is disordered. Residues 1722 to 1735 (KKLDETDDELSHRF) are compositionally biased toward basic and acidic residues.

As to expression, larval midgut (at protein level).

Its subcellular location is the apical cell membrane. It is found in the cell projection. The protein resides in the microvillus membrane. Its function is as follows. Cadherins are calcium-dependent cell adhesion proteins. They preferentially interact with themselves in a homophilic manner in connecting cells. In terms of biological role, (Microbial infection) Binds to and is probably the functional receptor for B.thuringiensis subsp. israelensis (Bti) insecticidal toxin Cry4B. Trichoplusia ni insect cells stably transfected with this protein become suspectible to Cry4B; cells undergo oncosis, they bleb and ruffle after 20-40 minutes, swell after 40-60 minutes and lyse after 90 minutes. Following toxin treatment in the T.in insect system levels of intracellular 3',5'-cyclic AMP (cAMP) rise 12.5-fold; EDTA but not EGTA pretreatment prevents cAMP increase. Inorganic phosphate also rises 3.4-fold after toxin treatment. The polypeptide is Cadherin-AgCad1 (Anopheles gambiae (African malaria mosquito)).